The following is a 104-amino-acid chain: Large ribosomal subunit protein bL21c (104 aa).

Belongs to the bacterial ribosomal protein bL21 family. As to quaternary structure, part of the 50S ribosomal subunit.

The protein localises to the plastid. It is found in the chloroplast. Its function is as follows. This protein binds to 23S rRNA. This is Large ribosomal subunit protein bL21c from Guillardia theta (Cryptophyte).